We begin with the raw amino-acid sequence, 1228 residues long: Membrane-anchored lipid-binding protein LAM1 (1228 aa).

Residues 1–1062 lie on the Cytoplasmic side of the membrane; it reads MHEHKAELRL…IFKCFSKVNK (1062 aa). The region spanning 308-421 is the PH domain; that stretch reads EKGLSGWLYM…WINTLTSHKR (114 aa). The 206-residue stretch at 773–978 folds into the VASt domain; it reads EAWCYFQDNF…KTREYLKKFN (206 aa). A helical membrane pass occupies residues 1063-1083; the sequence is TLYYCLLISAVTNLFFVGKSI. Residues 1084 to 1228 lie on the Lumenal side of the membrane; sequence HSYFSVKSAE…EYNRLSAIPV (145 aa). N1205 carries an N-linked (GlcNAc...) asparagine glycan.

It belongs to the SIP3 family.

It localises to the mitochondrion membrane. The protein localises to the endoplasmic reticulum membrane. Functionally, involved in mitochondrial fragmentation during programmed cell death in response to high levels of alpha-factor mating pheromone or the drug amiodarone. May be involved in sterol transfer between intracellular membranes. In Saccharomyces cerevisiae (strain ATCC 204508 / S288c) (Baker's yeast), this protein is Membrane-anchored lipid-binding protein LAM1.